The sequence spans 369 residues: Holliday junction branch migration complex subunit RuvB (369 aa).

Residues 1–21 (MHKNENNRLLGSVSLPDDPDR) form a disordered region. Residues 1–184 (MHKNENNRLL…FGIPIRLNFY (184 aa)) are large ATPase domain (RuvB-L). Residues Leu-23, Arg-24, Gly-65, Lys-68, Thr-69, Thr-70, 131 to 133 (EDY), Arg-174, Tyr-184, and Arg-221 each bind ATP. Position 69 (Thr-69) interacts with Mg(2+). Positions 185-255 (TIEELEYIVK…IADTALSRLE (71 aa)) are small ATPAse domain (RuvB-S). Residues 258-369 (HLGLDPLDRN…QKHLWEKDYD (112 aa)) are head domain (RuvB-H). Positions 294, 313, and 318 each coordinate DNA.

Belongs to the RuvB family. Homohexamer. Forms an RuvA(8)-RuvB(12)-Holliday junction (HJ) complex. HJ DNA is sandwiched between 2 RuvA tetramers; dsDNA enters through RuvA and exits via RuvB. An RuvB hexamer assembles on each DNA strand where it exits the tetramer. Each RuvB hexamer is contacted by two RuvA subunits (via domain III) on 2 adjacent RuvB subunits; this complex drives branch migration. In the full resolvosome a probable DNA-RuvA(4)-RuvB(12)-RuvC(2) complex forms which resolves the HJ.

Its subcellular location is the cytoplasm. It catalyses the reaction ATP + H2O = ADP + phosphate + H(+). The RuvA-RuvB-RuvC complex processes Holliday junction (HJ) DNA during genetic recombination and DNA repair, while the RuvA-RuvB complex plays an important role in the rescue of blocked DNA replication forks via replication fork reversal (RFR). RuvA specifically binds to HJ cruciform DNA, conferring on it an open structure. The RuvB hexamer acts as an ATP-dependent pump, pulling dsDNA into and through the RuvAB complex. RuvB forms 2 homohexamers on either side of HJ DNA bound by 1 or 2 RuvA tetramers; 4 subunits per hexamer contact DNA at a time. Coordinated motions by a converter formed by DNA-disengaged RuvB subunits stimulates ATP hydrolysis and nucleotide exchange. Immobilization of the converter enables RuvB to convert the ATP-contained energy into a lever motion, pulling 2 nucleotides of DNA out of the RuvA tetramer per ATP hydrolyzed, thus driving DNA branch migration. The RuvB motors rotate together with the DNA substrate, which together with the progressing nucleotide cycle form the mechanistic basis for DNA recombination by continuous HJ branch migration. Branch migration allows RuvC to scan DNA until it finds its consensus sequence, where it cleaves and resolves cruciform DNA. This is Holliday junction branch migration complex subunit RuvB from Bartonella bacilliformis (strain ATCC 35685 / KC583 / Herrer 020/F12,63).